A 1247-amino-acid chain; its full sequence is Structural polyprotein (1247 aa).

Residues 36–67 are host transcription inhibition; that stretch reads RPAGQLAQLISAVSRLALRTVPQKPRRTRKIK. The tract at residues 54–103 is disordered; it reads RTVPQKPRRTRKIKKQKQVKQEQQSTTNQKKKAPKQKQTQKKKRPGRRER. Composition is skewed to basic residues over residues 59–71 and 82–100; these read KPRR…KQKQ and QKKK…RPGR. The Nuclear localization signal motif lies at 60-98; it reads PRRTRKIKKQKQVKQEQQSTTNQKKKAPKQKQTQKKKRP. Residues 83 to 113 form a binding to the viral RNA region; sequence KKKAPKQKQTQKKKRPGRRERMCMKIENDCI. The segment at 98–112 is ribosome-binding; it reads PGRRERMCMKIENDC. Cysteines 112 and 127 form a disulfide. In terms of domain architecture, Peptidase S3 spans 112 to 260; that stretch reads CIFEVRHEGK…KITPEGSVEW (149 aa). The Charge relay system role is filled by His138. A Nuclear export signal motif is present at residues 143–153; sequence IDNADLAKLAF. Residues 154-159 form an interaction with spike glycoprotein E2 region; sequence KRSSKY. Asp160 (charge relay system) is an active-site residue. The dimerization of the capsid protein stretch occupies residues 182 to 192; that stretch reads PEGYYNWHHGA. Residue Ser212 is the Charge relay system of the active site. The tract at residues 218-222 is dimerization of the capsid protein; that stretch reads DNKGR. The interval 261–273 is functions as an uncleaved signal peptide for the precursor of protein E3/E2; the sequence is SLALPVMCLLANT. Cystine bridges form between Cys268-Cys277, Cys282-Cys286, Cys285-Cys317, Cys343-Cys449, Cys346-Cys352, Cys415-Cys429, Cys477-Cys590, Cys525-Cys549, and Cys527-Cys544. The N-linked (GlcNAc...) asparagine; by host glycan is linked to Asn272. N-linked (GlcNAc...) asparagine; by host glycosylation is found at Asn587 and Asn669. A helical transmembrane segment spans residues 692-712; the sequence is IAVLAAASIVITSLVGLSLGM. An interaction with the capsid protein region spans residues 715–719; it reads CARRR. S-palmitoyl cysteine; by host attachment occurs at residues Cys720, Cys740, and Cys741. A helical membrane pass occupies residues 720–740; sequence CITPYELTPGATIPFLLGVLC. Residues 720–740 are transient transmembrane before p62-6K protein processing; it reads CITPYELTPGATIPFLLGVLC. Cysteines 720 and 741 form a disulfide. The chain crosses the membrane as a helical span at residues 763-783; it reads PLFWLQLLIPLSAAIVVCNCL. 4 disulfides stabilise this stretch: Cys857–Cys922, Cys870–Cys902, Cys871–Cys904, and Cys876–Cys886. The E1 fusion peptide loop stretch occupies residues 892 to 909; the sequence is VYPFMWGGAYCFCDAENT. 2 N-linked (GlcNAc...) asparagine; by host glycosylation sites follow: Asn949 and Asn1078. 4 disulfides stabilise this stretch: Cys1067–Cys1079, Cys1109–Cys1184, Cys1114–Cys1188, and Cys1136–Cys1178. The helical transmembrane segment at 1224–1244 threads the bilayer; it reads GVGLVVAIAALILIIVLCVSF. Cys1241 carries the S-palmitoyl cysteine; by host lipid modification. The S-stearoyl cysteine; by host moiety is linked to residue Cys1241.

Homodimer. Homomultimer. Interacts with host karyopherin KPNA4; this interaction allows the nuclear import of the viral capsid protein. Interacts with spike glycoprotein E2. Interacts with host IRAK1; the interaction leads to inhibition of IRAK1-dependent signaling. As to quaternary structure, the precursor of protein E3/E2 and E1 form a heterodimer shortly after synthesis. In terms of assembly, the precursor of protein E3/E2 and E1 form a heterodimer shortly after synthesis. Processing of the precursor of protein E3/E2 into E2 and E3 results in a heterodimer of the spike glycoproteins E2 and E1. Spike at virion surface are constituted of three E2-E1 heterodimers. After target cell attachment and endocytosis, E1 change conformation to form homotrimers. Interacts with 6K protein. Interacts with spike glycoprotein E1. Processing of the precursor of protein E3/E2 into E2 and E3 results in a heterodimer of the spike glycoproteins E2 and E1. Spike at virion surface are constituted of a trimer of E2-E1 heterodimers. Interacts with 6K protein. Interacts with host MXRA8; this interaction mediates virus entry. As to quaternary structure, oligomer. Interacts with spike glycoprotein E1. Interacts with spike glycoprotein E2. In terms of processing, structural polyprotein: Specific enzymatic cleavages in vivo yield mature proteins. Capsid protein is auto-cleaved during polyprotein translation, unmasking a signal peptide at the N-terminus of the precursor of E3/E2. The remaining polyprotein is then targeted to the host endoplasmic reticulum, where host signal peptidase cleaves it into pE2, 6K and E1 proteins. pE2 is further processed to mature E3 and E2 by host furin in trans-Golgi vesicle. Post-translationally, palmitoylated via thioester bonds. These palmitoylations may induce disruption of the C-terminus transmembrane. This would result in the reorientation of E2 C-terminus from lumenal to cytoplasmic side. N-glycosylated. In terms of processing, palmitoylated via thioester bonds.

Its subcellular location is the virion. The protein resides in the host cytoplasm. The protein localises to the host cell membrane. It localises to the host nucleus. It is found in the virion membrane. Its subcellular location is the host Golgi apparatus. The protein resides in the host trans-Golgi network. The protein localises to the host endoplasmic reticulum. It carries out the reaction Autocatalytic release of the core protein from the N-terminus of the togavirus structural polyprotein by hydrolysis of a -Trp-|-Ser- bond.. Its function is as follows. Forms an icosahedral capsid with a T=4 symmetry composed of 240 copies of the capsid protein surrounded by a lipid membrane through which penetrate 80 spikes composed of trimers of E1-E2 heterodimers. The capsid protein binds to the viral RNA genome at a site adjacent to a ribosome binding site for viral genome translation following genome release. Possesses a protease activity that results in its autocatalytic cleavage from the nascent structural protein. Following its self-cleavage, the capsid protein transiently associates with ribosomes, and within several minutes the protein binds to viral RNA and rapidly assembles into icosahedric core particles. The resulting nucleocapsid eventually associates with the cytoplasmic domain of the spike glycoprotein E2 at the cell membrane, leading to budding and formation of mature virions. In case of infection, new virions attach to target cells and after clathrin-mediated endocytosis their membrane fuses with the host endosomal membrane. This leads to the release of the nucleocapsid into the cytoplasm, followed by an uncoating event necessary for the genomic RNA to become accessible. The uncoating might be triggered by the interaction of capsid proteins with ribosomes. Binding of ribosomes would release the genomic RNA since the same region is genomic RNA-binding and ribosome-binding. Specifically inhibits interleukin-1 receptor-associated kinase 1/IRAK1-dependent signaling during viral entry, representing a means by which the alphaviruses may evade innate immune detection and activation prior to viral gene expression. In terms of biological role, provides the signal sequence for the translocation of the precursor of protein E3/E2 to the host endoplasmic reticulum. Furin-cleaved E3 remains associated with spike glycoprotein E1 and mediates pH protection of the latter during the transport via the secretory pathway. After virion release from the host cell, the assembly protein E3 is gradually released in the extracellular space. Functionally, plays a role in viral attachment to target host cell, by binding to the cell receptor MXRA8. Synthesized as a p62 precursor which is processed by furin at the cell membrane just before virion budding, giving rise to E2-E1 heterodimer. The p62-E1 heterodimer is stable, whereas E2-E1 is unstable and dissociate at low pH. p62 is processed at the last step, presumably to avoid E1 fusion activation before its final export to cell surface. E2 C-terminus contains a transitory transmembrane that would be disrupted by palmitoylation, resulting in reorientation of the C-terminal tail from lumenal to cytoplasmic side. This step is critical since E2 C-terminus is involved in budding by interacting with capsid proteins. This release of E2 C-terminus in cytoplasm occurs lately in protein export, and precludes premature assembly of particles at the endoplasmic reticulum membrane. Acts as a viroporin that participates in virus glycoprotein processing and transport to the plasma membrane, cell permeabilization and budding of viral particles. Disrupts the calcium homeostasis of the cell, probably at the endoplasmic reticulum level. This leads to cytoplasmic calcium elevation. Because of its lipophilic properties, the 6K protein is postulated to influence the selection of lipids that interact with the transmembrane domains of the glycoproteins, which, in turn, affects the deformability of the bilayer required for the extreme curvature that occurs as budding proceeds. Present in low amount in virions, about 3% compared to viral glycoproteins. Its function is as follows. Class II viral fusion protein. Fusion activity is inactive as long as E1 is bound to E2 in mature virion. After virus attachment to target cell via host MXRA8 and endocytosis, acidification of the endosome induce dissociation of E1/E2 heterodimer and concomitant trimerization of the E1 subunits. This E1 trimer is fusion active, and promotes release of viral nucleocapsid in cytoplasm after endosome and viral membrane fusion. Efficient fusion requires the presence of cholesterol and sphingolipid in the target membrane. The protein is Structural polyprotein of O'nyong-nyong virus (strain Gulu) (ONNV).